The following is a 298-amino-acid chain: Rhodopsin (298 aa).

At 1–15 (IHLHWYEYPPMNPMM) the chain is on the extracellular side. A helical transmembrane segment spans residues 16–40 (YPLLLIFMLFTGILCLAGNFVTIWV). Topologically, residues 41–52 (FMNTKSLRTPAN) are cytoplasmic. The chain crosses the membrane as a helical span at residues 53-75 (LLVVNLAMSDFLMMFTMFPPMMV). Residues 76-89 (TCYYHTWTLGPTFC) lie on the Extracellular side of the membrane. Cysteines 89 and 166 form a disulfide. A helical membrane pass occupies residues 90–112 (QVYAFLGNLCGCASIWTMVFITF). Residues 113-115 (DRY) carry the 'Ionic lock' involved in activated form stabilization motif. Over 113–131 (DRYNVIVKGVAGEPLSTKK) the chain is Cytoplasmic. The helical transmembrane segment at 132–152 (ASLWILTIWVLSTTWCMAPFF) threads the bilayer. The Extracellular segment spans residues 153-179 (GWNHYVPEGNLTGCGTDYLSEDILSRS). N162 carries an N-linked (GlcNAc...) asparagine glycan. A helical transmembrane segment spans residues 180 to 201 (YLYVYSTWVYFLPLAITIYCYV). Topologically, residues 202–242 (FIIKAVAAHEKGMRDQAKKMGIKSLRNEEAQKTSAECRLAK) are cytoplasmic. The helical transmembrane segment at 243 to 264 (IAMTTVALWFIAWTPYLLINWV) threads the bilayer. Over 265–275 (GMFARSYLSPV) the chain is Extracellular. The helical transmembrane segment at 276 to 297 (YTIWGYVFAKANAVYNPIVYAI) threads the bilayer. At K285 the chain carries N6-(retinylidene)lysine.

Belongs to the G-protein coupled receptor 1 family. Opsin subfamily. As to quaternary structure, homodimer. Interacts with GNAQ. Contains one covalently linked retinal chromophore.

It is found in the cell projection. Its subcellular location is the rhabdomere membrane. Its function is as follows. Photoreceptor required for image-forming vision at low light intensity. Can use both retinal and 3-dehydroretinal as visual pigment. Light-induced isomerization of 11-cis to all-trans retinal triggers a conformational change that activates signaling via G-proteins. Signaling via GNAQ probably mediates the activation of phospholipase C. In Procambarus orcinus (Crayfish), this protein is Rhodopsin (RHO).